Reading from the N-terminus, the 162-residue chain is Endoribonuclease YbeY (162 aa).

Zn(2+)-binding residues include H118, H122, and H128.

It belongs to the endoribonuclease YbeY family. Zn(2+) is required as a cofactor.

The protein resides in the cytoplasm. Functionally, single strand-specific metallo-endoribonuclease involved in late-stage 70S ribosome quality control and in maturation of the 3' terminus of the 16S rRNA. This is Endoribonuclease YbeY from Glaesserella parasuis serovar 5 (strain SH0165) (Haemophilus parasuis).